The primary structure comprises 230 residues: MNSIEFPLIDRTTQNSVISTTLNDLSNWSRLSSLWPLLYGTSCCFIEFASLIGSRFDFDRYGLVPRSSPRQADLILTAGTVTMKMAPSLVRLYEQMPEPKYVIAMGACTITGGMFSTDSYSTVRGVDKLIPVDVYLPGCPPKPESILDAITKLRKKISREIHEDQTSSLSSQRENRCFTTNHKFYVERSTHTGNYDQVLFHQPPSTSEISSDTFFRYQKVQYPPRNEIVN.

[4Fe-4S] cluster contacts are provided by C43, C44, C108, and C139.

It belongs to the complex I 20 kDa subunit family. In terms of assembly, NDH is composed of at least 16 different subunits, 5 of which are encoded in the nucleus. It depends on [4Fe-4S] cluster as a cofactor.

The protein resides in the plastid. The protein localises to the chloroplast thylakoid membrane. It catalyses the reaction a plastoquinone + NADH + (n+1) H(+)(in) = a plastoquinol + NAD(+) + n H(+)(out). The catalysed reaction is a plastoquinone + NADPH + (n+1) H(+)(in) = a plastoquinol + NADP(+) + n H(+)(out). Its function is as follows. NDH shuttles electrons from NAD(P)H:plastoquinone, via FMN and iron-sulfur (Fe-S) centers, to quinones in the photosynthetic chain and possibly in a chloroplast respiratory chain. The immediate electron acceptor for the enzyme in this species is believed to be plastoquinone. Couples the redox reaction to proton translocation, and thus conserves the redox energy in a proton gradient. This chain is NAD(P)H-quinone oxidoreductase subunit K, chloroplastic, found in Lotus japonicus (Lotus corniculatus var. japonicus).